Consider the following 352-residue polypeptide: Protein RecA (352 aa).

An ATP-binding site is contributed by 66–73; that stretch reads GPESSGKT.

The protein belongs to the RecA family.

It is found in the cytoplasm. In terms of biological role, can catalyze the hydrolysis of ATP in the presence of single-stranded DNA, the ATP-dependent uptake of single-stranded DNA by duplex DNA, and the ATP-dependent hybridization of homologous single-stranded DNAs. It interacts with LexA causing its activation and leading to its autocatalytic cleavage. The polypeptide is Protein RecA (Psychrobacter arcticus (strain DSM 17307 / VKM B-2377 / 273-4)).